A 460-amino-acid chain; its full sequence is Putative arginine/ornithine antiporter (460 aa).

Over 1–4 the chain is Cytoplasmic; sequence MEKK. The chain crosses the membrane as a helical span at residues 5-25; that stretch reads LGLSALTALVLSSMLGAGVFS. At 26 to 38 the chain is on the periplasmic side; that stretch reads LPQNMAAVASPAA. Residues 39-59 form a helical membrane-spanning segment; that stretch reads LLIGWGITGAGILLLAFAMLI. Over 60–92 the chain is Cytoplasmic; it reads LTRIRPELDGGIFTYAREGFGELIGFCSAWGYW. A helical transmembrane segment spans residues 93 to 113; sequence LCAVIANVSYLVIVFSALSFF. Topologically, residues 114–125 are periplasmic; sequence TDTPELRLFGDG. A helical membrane pass occupies residues 126–146; it reads NTWQSIVGASALLWIVHFLIL. Topologically, residues 147–157 are cytoplasmic; sequence RGVQTAASINL. A helical transmembrane segment spans residues 158–178; that stretch reads VATLAKLLPLGLFVVLAMMMF. Topologically, residues 179-201 are periplasmic; that stretch reads KLDTFKLDFTGLALGVPVWEQVK. Residues 202-222 form a helical membrane-spanning segment; it reads NTMLITLWVFIGVEGAVVVSA. Over 223-235 the chain is Cytoplasmic; sequence RARNKRDVGKATL. Residues 236–256 traverse the membrane as a helical segment; that stretch reads LAVLSALGVYLLVTLLSLGVV. The Periplasmic segment spans residues 257-282; that stretch reads ARPELAEIRNPSMAGLMVEMMGPWGE. The helical transmembrane segment at 283–303 threads the bilayer; that stretch reads IIIAAGLIVSVCGAYLSWTIM. The Cytoplasmic segment spans residues 304–331; the sequence is AAEVPFLAATHKAFPRIFARQNAQAAPS. The chain crosses the membrane as a helical span at residues 332-352; the sequence is ASLWLTNICVQICLVLIWLTG. Residues 353-357 are Periplasmic-facing; sequence SDYNT. The helical transmembrane segment at 358–378 threads the bilayer; that stretch reads LLTIASEMILVPYFLVGAFLL. Topologically, residues 379–384 are cytoplasmic; that stretch reads KIATRP. The next 2 helical transmembrane spans lie at 385-405 and 406-426; these read LHKAVGVGACIYGLWLLYASG and PMHLLLSVVLYAPGLLVFLYA. At 427–439 the chain is on the cytoplasmic side; the sequence is RKTHTHDNVLNRQ. The helical transmembrane segment at 440–460 threads the bilayer; that stretch reads EMVLIGMLLIASVPATWMLVG.

This sequence belongs to the amino acid-polyamine-organocation (APC) superfamily. Basic amino acid/polyamine antiporter (APA) (TC 2.A.3.2) family.

The protein resides in the cell inner membrane. The enzyme catalyses L-ornithine(in) + L-arginine(out) = L-ornithine(out) + L-arginine(in). Its function is as follows. Catalyzes electroneutral exchange between arginine and ornithine to allow high-efficiency energy conversion in the arginine deiminase pathway. This chain is Putative arginine/ornithine antiporter (ydgI), found in Escherichia coli O6:H1 (strain CFT073 / ATCC 700928 / UPEC).